The sequence spans 1550 residues: Adhesion G protein-coupled receptor L3 (1550 aa).

The N-terminal stretch at 1–19 (MCPPQLFILMMLLAPVVHG) is a signal peptide. Residues 20-948 (GKHNERHPAL…VHDLLLDVIT (929 aa)) lie on the Extracellular side of the membrane. Residues 34-80 (RHAEHSPGGPLPPRHLLQQPAAERSTAHRGQGPRGTARGVRGPGAPG) are disordered. The SUEL-type lectin domain maps to 103–192 (SCESYPIELR…KYLEVQYECV (90 aa)). 5 disulfide bridges follow: Cys-104/Cys-134, Cys-113/Cys-191, Cys-146/Cys-178, Cys-159/Cys-165, and Cys-203/Cys-385. Asn-161 carries N-linked (GlcNAc...) asparagine glycosylation. Residues 202 to 461 (LCPGLLKGVY…VVKYSLDFGP (260 aa)) form the Olfactomedin-like domain. The tract at residues 317–347 (YHDTSPYRWGGKSDIDLAVDENGLWVIYATE) is interaction with FLRT3. Residues Asp-332, Asn-380, Ala-381, and Val-435 each contribute to the Ca(2+) site. The interval 518-538 (NLGRSTTPSLPGRRNRSTSTP) is disordered. Asn-532, Asn-616, Asn-839, Asn-884, and Asn-910 each carry an N-linked (GlcNAc...) asparagine glycan. Positions 755-934 (DIVRENTDNI…AVLMAHVEVK (180 aa)) constitute a GAIN-B domain. 2 disulfides stabilise this stretch: Cys-885-Cys-916 and Cys-904-Cys-918. The tract at residues 885–934 (CSFWSYSKRTMTGYWSTQGCRLLTTNKTHTTCSCNHLTNFAVLMAHVEVK) is GPS. The stachel stretch occupies residues 922 to 938 (TNFAVLMAHVEVKHSDA). A helical membrane pass occupies residues 949-969 (WVGILLSLVCLLICIFTFCFF). The Cytoplasmic portion of the chain corresponds to 970-977 (RGLQSDRN). The helical transmembrane segment at 978-998 (TIHKNLCISLFVAELLFLIGI) threads the bilayer. Asn-999 carries N-linked (GlcNAc...) asparagine glycosylation. Topologically, residues 999–1006 (NRTDQPIA) are extracellular. A helical transmembrane segment spans residues 1007–1027 (CAVFAALLHFFFLAAFTWMFL). Residues 1028–1048 (EGVQLYIMLVEVFESEHSRRK) are Cytoplasmic-facing. A helical transmembrane segment spans residues 1049–1069 (YFYLVGYGMPALIVAVSAAVD). At 1070–1087 (YRSYGTDKVCWLRLDTYF) the chain is on the extracellular side. The helical transmembrane segment at 1088–1108 (IWSFIGPATLIIMLNVIFLGI) threads the bilayer. Residues 1109–1141 (ALYKMFHHTAILKPESGCLDNINYEDNRPFIKS) lie on the Cytoplasmic side of the membrane. The helical transmembrane segment at 1142–1162 (WVIGAIALLCLLGLTWAFGLM) threads the bilayer. Residues 1163-1168 (YINEST) are Extracellular-facing. N-linked (GlcNAc...) asparagine glycosylation is present at Asn-1165. The helical transmembrane segment at 1169–1189 (VIMAYLFTIFNSLQGMFIFIF) threads the bilayer. Residues 1190–1550 (HCVLQKKVRK…KGPAHLVTSL (361 aa)) are Cytoplasmic-facing. The tract at residues 1213–1236 (KSTESSIGSGKTSGSRTPGRYSTG) is disordered. Ser-1253 carries the phosphoserine modification. Disordered regions lie at residues 1410–1435 (LLPP…PQDH) and 1528–1550 (PPNK…VTSL). Residue Ser-1535 is modified to Phosphoserine. The PDZ-binding signature appears at 1545–1550 (HLVTSL).

The protein belongs to the G-protein coupled receptor 2 family. LN-TM7 subfamily. In terms of assembly, heterodimer of 2 chains generated by proteolytic processing; the large extracellular N-terminal fragment and the membrane-bound C-terminal fragment predominantly remain associated and non-covalently linked. Interacts (via olfactomedin-like domain) with FLRT1 (via extracellular domain). Interacts (via olfactomedin-like domain) with FLRT2 (via extracellular domain). Interacts (via olfactomedin-like domain) with FLRT3 (via extracellular domain); the interaction is direct. Interacts (via extracellular domain) with TENM1. Interacts (via extracellular domain) with TENM2. Interacts (via extracellular domain) with TENM3. Identified in a complex with FLRT3 and UNC5B; does not interact with UNC5B by itself. Identified in a complex with FLRT3 and UNC5D; does not interact with UNC5D by itself. As to quaternary structure, interacts (via PDZ-binding motif) with SHANK3. Interacts (via PDZ-binding motif) with DLG4. In terms of processing, autoproteolytically processed at the GPS region of the GAIN-B domain; this cleavage modulates receptor activity. Predominantly expressed in brain, followed by heart, placenta, pancreas, kidney and testis.

The protein resides in the cell membrane. It is found in the postsynaptic cell membrane. It localises to the cell projection. Its subcellular location is the axon. The protein localises to the cell junction. Forms a heterodimer of 2 chains generated by proteolytic processing that remain associated through non-covalent interactions mediated by the GAIN-B domain. In the inactivated receptor, the Stachel sequence (also named stalk) is embedded in the GAIN-B domain, where it adopts a beta-strand conformation. On activation, the Stachel moves into the 7 transmembrane region and adopts a twisted hook-shaped configuration that forms contacts within the receptor, leading to coupling of a G-alpha protein, which activates signaling. The cleaved GAIN-B and N-terminal domains can then dissociate from the rest of the receptor. Functionally, orphan adhesion G-protein coupled receptor (aGPCR), which mediates synapse specificity. Ligand binding causes a conformation change that triggers signaling via guanine nucleotide-binding proteins (G proteins) and modulates the activity of downstream effectors. ADGRL3 is coupled with different classes of G alpha proteins, such as G(12)/G(13), G(s), G(i) or G(q), depending on the context. Coupling to G(12)/G(13) G proteins, which mediates the activation Rho small GTPases is the most efficient. Following G-protein coupled receptor activation, associates with cell adhesion molecules that are expressed at the surface of adjacent cells to direct synapse specificity. Specifically mediates the establishment of Schaffer-collateral synapses formed by CA3-region axons on CA1-region pyramidal neurons in the hippocampus. Localizes to postsynaptic spines in excitatory synapses in the S.oriens and S.radiatum and interacts with presynaptic cell adhesion molecules FLRT3 and TENM2, promoting synapse formation. Plays a role in the development of glutamatergic synapses in the cortex. Important in determining the connectivity rates between the principal neurons in the cortex. Orphan adhesion G-protein coupled receptor (aGPCR), which mediates synapse specificity. Ligand binding causes a conformation change that triggers signaling via guanine nucleotide-binding proteins (G proteins) and modulates the activity of downstream effectors, such as adenylate cyclase. Isoform 1 is specifically coupled to G(s) G proteins and mediates activation of adenylate cyclase activity. Following G-protein coupled receptor activation, undergoes liquid-liquid phase transition, associates with (1) cell adhesion molecules that are expressed at the surface of adjacent cells, as well as (2) PDZ-containing proteins, such as SHANK3 and DLG4, in the cytoplasm to direct synapse formation. The chain is Adhesion G protein-coupled receptor L3 from Rattus norvegicus (Rat).